A 445-amino-acid polypeptide reads, in one-letter code: Clusterin (445 aa).

The signal sequence occupies residues 1-22; that stretch reads MMKTLLLLVGLLLTWDNGRVLG. Positions 78–81 match the Nuclear localization signal motif; sequence KKKK. Residues asparagine 86 and asparagine 103 are each glycosylated (N-linked (GlcNAc...) asparagine). Disulfide bonds link cysteine 102/cysteine 309, cysteine 113/cysteine 301, cysteine 116/cysteine 298, cysteine 121/cysteine 291, and cysteine 129/cysteine 281. At serine 133 the chain carries Phosphoserine. 5 N-linked (GlcNAc...) asparagine glycosylation sites follow: asparagine 145, asparagine 277, asparagine 287, asparagine 350, and asparagine 370. Position 392 is a phosphoserine (serine 392). A Nuclear localization signal motif is present at residues 439-443; it reads RQKHR.

The protein belongs to the clusterin family. As to quaternary structure, antiparallel disulfide-linked heterodimer of an alpha chain and a beta chain. Self-associates and forms higher oligomers. Interacts with a broad range of misfolded proteins, including APP, APOC2 and LYZ. Slightly acidic pH promotes interaction with misfolded proteins. Forms high-molecular weight oligomers upon interaction with misfolded proteins. Interacts with APOA1, LRP2, CLUAP1 and PON1. Interacts with the complement membrane attack complex. Interacts (via alpha chain) with XRCC6. Interacts with SYVN1, COMMD1, BTRC, CUL1 and with ubiquitin and SCF (SKP1-CUL1-F-box protein) E3 ubiquitin-protein ligase complexes. Interacts (via alpha chain) with BAX in stressed cells, where BAX undergoes a conformation change leading to association with the mitochondrial membrane. Does not interact with BAX in unstressed cells. Found in a complex with LTF, CLU, EPPIN and SEMG1. Interacts (immaturely glycosylated pre-secreted form) with HSPA5; this interaction promotes CLU stability and facilitates stress-induced CLU retrotranslocation from the secretory pathway to the mitochondria, thereby reducing stress-induced apoptosis by stabilizing mitochondrial membrane integrity. Interacts with BCL2L1; this interaction releases and activates BAX and promotes cell death. Interacts with TGFBR2 and ACVR1. Interacts (secreted form) with STMN3; this interaction may act as an important modulator during neuronal differentiation. Interacts with VLDLR and LRP8. In terms of processing, proteolytically cleaved on its way through the secretory system, probably within the Golgi lumen. Proteolytic cleavage is not necessary for its chaperone activity. All non-secreted forms are not proteolytically cleaved. Chaperone activity of uncleaved forms is dependent on a non-reducing environment. This proteolytic maturation is disulfide bond formation dependent. Post-translationally, polyubiquitinated, leading to proteasomal degradation. Under cellular stress, the intracellular level of cleaved form is reduced due to proteasomal degradation. Heavily N-glycosylated. About 30% of the protein mass is comprised of complex N-linked carbohydrate. Endoplasmic reticulum (ER) stress induces changes in glycosylation status and increases level of hypoglycosylated forms. Core carbohydrates are essential for chaperone activity. Non-secreted forms are hypoglycosylated or unglycosylated.

The protein localises to the secreted. The protein resides in the nucleus. Its subcellular location is the cytoplasm. It is found in the mitochondrion membrane. It localises to the cytosol. The protein localises to the microsome. The protein resides in the endoplasmic reticulum. Its subcellular location is the mitochondrion. It is found in the perinuclear region. It localises to the cytoplasmic vesicle. The protein localises to the secretory vesicle. The protein resides in the chromaffin granule. In terms of biological role, functions as extracellular chaperone that prevents aggregation of non native proteins. Prevents stress-induced aggregation of blood plasma proteins. Inhibits formation of amyloid fibrils by APP, APOC2, B2M, CALCA, CSN3, SNCA and aggregation-prone LYZ variants (in vitro). Does not require ATP. Maintains partially unfolded proteins in a state appropriate for subsequent refolding by other chaperones, such as HSPA8/HSC70. Does not refold proteins by itself. Binding to cell surface receptors triggers internalization of the chaperone-client complex and subsequent lysosomal or proteasomal degradation. When secreted, protects cells against apoptosis and against cytolysis by complement: inhibits assembly of the complement membrane attack complex (MAC) by preventing polymerization of C9 pore component of the MAC complex. Intracellular forms interact with ubiquitin and SCF (SKP1-CUL1-F-box protein) E3 ubiquitin-protein ligase complexes and promote the ubiquitination and subsequent proteasomal degradation of target proteins. Promotes proteasomal degradation of COMMD1 and IKBKB. Modulates NF-kappa-B transcriptional activity. Following stress, promotes apoptosis. Inhibits apoptosis when associated with the mitochondrial membrane by interference with BAX-dependent release of cytochrome c into the cytoplasm. Plays a role in the regulation of cell proliferation. An intracellular form suppresses stress-induced apoptosis by stabilizing mitochondrial membrane integrity through interaction with HSPA5. Secreted form does not affect caspase or BAX-mediated intrinsic apoptosis and TNF-induced NF-kappa-B-activity. Secreted form act as an important modulator during neuronal differentiation through interaction with STMN3. Plays a role in the clearance of immune complexes that arise during cell injury. In Canis lupus familiaris (Dog), this protein is Clusterin (CLU).